The following is a 145-amino-acid chain: Cytochrome c2 (145 aa).

The first 21 residues, 1–21, serve as a signal peptide directing secretion; it reads MKFQVKALAAIAAFAALPALA. Gln-22 bears the Pyrrolidone carboxylic acid mark. The heme c site is built by Cys-36, Cys-39, His-40, and Met-121.

This sequence belongs to the cytochrome c family. In terms of processing, binds 1 heme c group covalently per subunit.

It localises to the periplasm. Its function is as follows. Cytochrome c2 is found mainly in purple, non-sulfur, photosynthetic bacteria where it functions as the electron donor to the oxidized bacteriochlorophyll in the photophosphorylation pathway. However, it may also have a role in the respiratory chain and is found in some non-photosynthetic bacteria. The protein is Cytochrome c2 (cycA) of Cereibacter sphaeroides (strain ATCC 17023 / DSM 158 / JCM 6121 / CCUG 31486 / LMG 2827 / NBRC 12203 / NCIMB 8253 / ATH 2.4.1.) (Rhodobacter sphaeroides).